The following is a 292-amino-acid chain: Elongation factor Ts (292 aa).

The involved in Mg(2+) ion dislocation from EF-Tu stretch occupies residues 79-82; the sequence is TDFV.

Belongs to the EF-Ts family.

The protein resides in the cytoplasm. Functionally, associates with the EF-Tu.GDP complex and induces the exchange of GDP to GTP. It remains bound to the aminoacyl-tRNA.EF-Tu.GTP complex up to the GTP hydrolysis stage on the ribosome. This Xanthomonas axonopodis pv. citri (strain 306) protein is Elongation factor Ts.